A 947-amino-acid chain; its full sequence is Protein NETWORKED 2A (947 aa).

An NAB domain is found at 10–90; that stretch reads YSWWWASHIR…ERYDHLSREL (81 aa). The disordered stretch occupies residues 105-131; it reads VQFPLEDDSDENEDYDGRPRKPPKHLH. The segment covering 109–118 has biased composition (acidic residues); sequence LEDDSDENED. Coiled-coil stretches lie at residues 348 to 454 and 568 to 619; these read KLAE…IQDV and VLRD…QKLD. 2 stretches are compositionally biased toward basic and acidic residues: residues 618 to 627 and 635 to 644; these read LDTTGKDSPH and LEHEQGHHET. 3 disordered regions span residues 618-675, 743-763, and 911-947; these read LDTT…RTKS, RIES…AVAS, and KNRQ…KLPE. Over residues 645–660 the composition is skewed to polar residues; the sequence is VSISPTSNFSVATTPH. A compositionally biased stretch (basic and acidic residues) spans 662 to 675; the sequence is QVGDVKRTPGRTKS. The stretch at 722–809 forms a coiled coil; that stretch reads VHQIQKYQTT…LANIQEEIAR (88 aa). Polar residues-rich tracts occupy residues 749-761 and 915-927; these read QQES…NTAV and QKQS…SCVS.

The protein belongs to the NET family. In terms of tissue distribution, expressed specifically in pollen.

The protein resides in the cell membrane. In terms of biological role, plant-specific actin binding protein. Associates with F-actin at the plasma membrane in growing pollen tubes. May be part of a membrane-cytoskeletal adapter complex. The sequence is that of Protein NETWORKED 2A from Arabidopsis thaliana (Mouse-ear cress).